We begin with the raw amino-acid sequence, 864 residues long: Leucine--tRNA ligase (864 aa).

Positions 42-52 (PYPSGKLHMGH) match the 'HIGH' region motif. The short motif at 624–628 (KMSKS) is the 'KMSKS' region element. Lysine 627 serves as a coordination point for ATP.

This sequence belongs to the class-I aminoacyl-tRNA synthetase family.

It is found in the cytoplasm. The catalysed reaction is tRNA(Leu) + L-leucine + ATP = L-leucyl-tRNA(Leu) + AMP + diphosphate. The polypeptide is Leucine--tRNA ligase (Burkholderia mallei (strain NCTC 10229)).